Reading from the N-terminus, the 72-residue chain is Crustacean hyperglycemic hormone (72 aa).

The residue at position 1 (Gln1) is a Pyrrolidone carboxylic acid. Position 3 is a D-phenylalanine; in form CHH-II (Phe3). Cystine bridges form between Cys7-Cys43, Cys23-Cys39, and Cys26-Cys52. Val72 is subject to Valine amide.

Stereoinversion of L-Phe (in CHH-I) to D-Phe (in CHH-II) the two forms are present in a ratio 3:1 (CHH-I/CHH-II). As to expression, produced by the medulla terminalis X-organ in the eyestalks and transported to the sinus gland where they are stored and released.

The protein localises to the secreted. Functionally, hormone found in the sinus gland of isopods and decapods which controls the blood sugar level. Has a secretagogue action over the amylase released from the midgut gland. May act as a stress hormone and may be involved in the control of molting and reproduction. The sequence is that of Crustacean hyperglycemic hormone from Procambarus bouvieri (Mexican crayfish).